The chain runs to 281 residues: Fructose-bisphosphate aldolase class 1 (281 aa).

The active-site Schiff-base intermediate with dihydroxyacetone-P is the Lys-191.

The protein belongs to the DeoC/FbaB aldolase family. Homooctamer.

Its subcellular location is the cytoplasm. It localises to the chromosome. The enzyme catalyses beta-D-fructose 1,6-bisphosphate = D-glyceraldehyde 3-phosphate + dihydroxyacetone phosphate. Its activity is regulated as follows. Activated by citrate. The sequence is that of Fructose-bisphosphate aldolase class 1 (fba) from Thermococcus kodakarensis (strain ATCC BAA-918 / JCM 12380 / KOD1) (Pyrococcus kodakaraensis (strain KOD1)).